A 975-amino-acid chain; its full sequence is E3 ubiquitin-protein ligase BRE1A (975 aa).

The interval 1 to 37 (MSGIGSKRAAGEPGTSVPPEKKTAVEDSGTTVETIKL) is disordered. Position 21 is an N6-acetyllysine (Lys-21). Ser-41 bears the Phosphoserine mark. Residues 43 to 90 (TEELDIRTLQTKNRKLAEMLDQRQAIEDELREHIEKLERRQATDDASL) are a coiled coil. Residues 125–155 (KALVVPEPEPDSDSNQERKDDRERGEGQEPA) form a disordered region. Phosphoserine is present on residues Ser-136 and Ser-138. Basic and acidic residues predominate over residues 139-151 (NQERKDDRERGEG). Coiled coils occupy residues 168 to 375 (EEME…EEVV) and 429 to 898 (SLHK…TTKK). Residues Lys-348 and Lys-510 each carry the N6-acetyllysine modification. The disordered stretch occupies residues 507–622 (DLNKTRLRSG…GKHDDGRKKE (116 aa)). At Ser-522 the chain carries Phosphoserine. A compositionally biased stretch (basic and acidic residues) spans 527 to 540 (EDPKDEPAELKQDS). The span at 543–552 (LATQSAASKA) shows a compositional bias: polar residues. A compositionally biased stretch (basic and acidic residues) spans 558 to 622 (NEIKSKRDEE…GKHDDGRKKE (65 aa)). Ser-562 carries the phosphoserine modification. The RING-type zinc-finger motif lies at 922–961 (CPCCNMRKKDAVLTKCFHVFCFECVKTRYDTRQRKCPKCN).

It belongs to the BRE1 family. Component of the RNF20/40 complex (also known as BRE1 complex) probably composed of 2 copies of RNF20/BRE1A and 2 copies of RNF40/BRE1B. Interacts with UBE2E1/UBCH6. Interacts with p53/TP53 and WAC. Interacts with PAF1; the interaction mediates the association of the PAF1 and RNF20/40 complexes which is a prerequsite for recruitment of UBE2A/B. Interacts with PA2G4. Interacts with FBXL19.

The protein localises to the nucleus. The catalysed reaction is S-ubiquitinyl-[E2 ubiquitin-conjugating enzyme]-L-cysteine + [acceptor protein]-L-lysine = [E2 ubiquitin-conjugating enzyme]-L-cysteine + N(6)-ubiquitinyl-[acceptor protein]-L-lysine.. It functions in the pathway protein modification; protein ubiquitination. Functionally, component of the RNF20/40 E3 ubiquitin-protein ligase complex that mediates monoubiquitination of 'Lys-120' of histone H2B (H2BK120ub1). H2BK120ub1 gives a specific tag for epigenetic transcriptional activation and is also prerequisite for histone H3 'Lys-4' and 'Lys-79' methylation (H3K4me and H3K79me, respectively). It thereby plays a central role in histone code and gene regulation. The RNF20/40 complex forms a H2B ubiquitin ligase complex in cooperation with the E2 enzyme UBE2A or UBE2B; reports about the cooperation with UBE2E1/UBCH are contradictory. Required for transcriptional activation of Hox genes. Recruited to the MDM2 promoter, probably by being recruited by p53/TP53, and thereby acts as a transcriptional coactivator. Mediates the polyubiquitination of PA2G4 leading to its proteasome-mediated degradation. This is E3 ubiquitin-protein ligase BRE1A (RNF20) from Bos taurus (Bovine).